Reading from the N-terminus, the 263-residue chain is Chymotrypsinogen 2 (263 aa).

An N-terminal signal peptide occupies residues 1 to 18 (MAFLWLLSCFALLGTAFG). 5 disulfide bridges follow: Cys19/Cys140, Cys60/Cys76, Cys154/Cys219, Cys186/Cys200, and Cys209/Cys238. The Peptidase S1 domain occupies 34-261 (IVNGEDAVPG…LIPWVQQILQ (228 aa)). His75 serves as the catalytic Charge relay system. Ser93 carries the phosphoserine modification. Residue Asp120 is the Charge relay system of the active site. The active-site Charge relay system is Ser213.

It belongs to the peptidase S1 family.

The protein resides in the secreted. It is found in the extracellular space. The catalysed reaction is Preferential cleavage: Tyr-|-Xaa, Trp-|-Xaa, Phe-|-Xaa, Leu-|-Xaa.. The sequence is that of Chymotrypsinogen 2 (CTRB1) from Canis lupus familiaris (Dog).